The chain runs to 37 residues: Photosystem II reaction center protein M (37 aa).

A helical transmembrane segment spans residues 7-27 (AFIAVLLFLAVPTAFLLIPYV).

This sequence belongs to the PsbM family. PSII is composed of 1 copy each of membrane proteins PsbA, PsbB, PsbC, PsbD, PsbE, PsbF, PsbH, PsbI, PsbJ, PsbK, PsbL, PsbM, PsbT, PsbX, PsbY, PsbZ, Psb30/Ycf12, at least 3 peripheral proteins of the oxygen-evolving complex and a large number of cofactors. It forms dimeric complexes.

Its subcellular location is the plastid. It localises to the chloroplast thylakoid membrane. In terms of biological role, one of the components of the core complex of photosystem II (PSII). PSII is a light-driven water:plastoquinone oxidoreductase that uses light energy to abstract electrons from H(2)O, generating O(2) and a proton gradient subsequently used for ATP formation. It consists of a core antenna complex that captures photons, and an electron transfer chain that converts photonic excitation into a charge separation. This subunit is found at the monomer-monomer interface. The protein is Photosystem II reaction center protein M of Pinus thunbergii (Japanese black pine).